Here is a 331-residue protein sequence, read N- to C-terminus: MDEKTKIYDITIIGGGPVGLFAAFYAGMRNASVKIIESLPQLGGQLSTLYPEKYIYDIPGYPAVRAQELVNNLIQQMKPFDPTIALEEAVISVEKQVDGTFEIITKKDTHYSKAIVITAGNGAFEPRRLDLPEAEQYEGKNIHYFINDLSRFSGRRVAVCGGGDSAVDWALMLEKVASSVSIVHRRNAFRAHEHSVNNLEKSSITIKTPFIPTEVLGNGDKLTHITLQEVKGDTSETLEIDDFIINYGFVSSLGPIKNWGLELERNSIIVNSKMETSIPGIYCAGDICTYDGKVKLIATGFGEAPTAVNNAMNFIDPKTRVQPMHSTSLFE.

Glu37, Gln45, Tyr50, Val90, Phe124, Asp286, and Thr327 together coordinate FAD.

Belongs to the ferredoxin--NADP reductase type 2 family. In terms of assembly, homodimer. FAD is required as a cofactor.

The catalysed reaction is 2 reduced [2Fe-2S]-[ferredoxin] + NADP(+) + H(+) = 2 oxidized [2Fe-2S]-[ferredoxin] + NADPH. The chain is Ferredoxin--NADP reductase 2 from Listeria welshimeri serovar 6b (strain ATCC 35897 / DSM 20650 / CCUG 15529 / CIP 8149 / NCTC 11857 / SLCC 5334 / V8).